A 338-amino-acid polypeptide reads, in one-letter code: UPF0284 protein PAE0372 (338 aa).

This sequence belongs to the UPF0284 family.

The sequence is that of UPF0284 protein PAE0372 from Pyrobaculum aerophilum (strain ATCC 51768 / DSM 7523 / JCM 9630 / CIP 104966 / NBRC 100827 / IM2).